The primary structure comprises 338 residues: Nicotinate-nucleotide--dimethylbenzimidazole phosphoribosyltransferase (338 aa).

Glu-306 functions as the Proton acceptor in the catalytic mechanism.

The protein belongs to the CobT family.

It carries out the reaction 5,6-dimethylbenzimidazole + nicotinate beta-D-ribonucleotide = alpha-ribazole 5'-phosphate + nicotinate + H(+). It participates in nucleoside biosynthesis; alpha-ribazole biosynthesis; alpha-ribazole from 5,6-dimethylbenzimidazole: step 1/2. Its function is as follows. Catalyzes the synthesis of alpha-ribazole-5'-phosphate from nicotinate mononucleotide (NAMN) and 5,6-dimethylbenzimidazole (DMB). The sequence is that of Nicotinate-nucleotide--dimethylbenzimidazole phosphoribosyltransferase from Cereibacter sphaeroides (strain KD131 / KCTC 12085) (Rhodobacter sphaeroides).